A 130-amino-acid chain; its full sequence is Histidine triad nucleotide-binding protein 1 (130 aa).

Residues 22 to 130 (LFGKIIRKEI…GGRQLQWPPG (109 aa)) form the HIT domain. The short motif at 114–118 (HLHLH) is the Histidine triad motif element.

In Caenorhabditis elegans, this protein is Histidine triad nucleotide-binding protein 1 (hint-1).